A 207-amino-acid polypeptide reads, in one-letter code: Protein Nef (207 aa).

Gly2 is lipidated: N-myristoyl glycine; by host. Ser6 carries the post-translational modification Phosphoserine; by host. Residues 62-66 form an acidic; interacts with host PACS1 and PACS2; stabilizes the interaction of NEF/MHC-I with host AP1M1; necessary for MHC-I internalization region; the sequence is EEDSD. Positions 70-79 are SH3-binding; interaction with Src family tyrosine kinases; it reads PVRPQVPLRP. The PxxP; stabilizes the interaction of NEF/MHC-I with host AP1M1; necessary for MHC-I internalization signature appears at 73-76; sequence PQVP. Residues 109-125 form a mediates dimerization, Nef-PTE1 interaction region; sequence DILDLWVYNTQGFFPDW. The segment at 149 to 181 is binding to ATP6V1H; sequence MDPAEIEEANKGENISLLHPICQHGMEDEDREV. The Dileucine internalization motif; necessary for CD4 internalization motif lies at 165–166; that stretch reads LL. Positions 175-176 match the Diacidic; necessary for CD4 internalization motif; the sequence is ED.

This sequence belongs to the lentivirus primate group Nef protein family. In terms of assembly, monomer; cytosolic form. Homodimer; membrane bound form. Interacts with Nef associated p21-activated kinase (PAK2); this interaction activates PAK2. Associates with the Nef-MHC-I-AP1 complex; this complex is required for MHC-I internalization. Interacts (via C-terminus) with host PI3-kinase. Interacts with host PACS1; this interaction seems to be weak. Interacts with host PACS2. Interacts with host LCK and MAPK3; these interactions inhibit the kinase activity of the latter. Interacts with host ATP6V1H; this interaction may play a role in CD4 endocytosis. Associates with the CD4-Nef-AP2 complex; this complex is required for CD4 internalization. Interacts with host AP2 subunit alpha and AP2 subunit sigma2. Interacts with TCR-zeta chain; this interaction up-regulates the Fas ligand (FasL) surface expression. Interacts with host HCK, LYN, and SRC; these interactions activate the Src family kinases. Interacts with MAP3K5; this interaction inhibits the Fas and TNFR-mediated death signals. Interacts with beta-COP and PTE1. Interacts with human RACK1; this increases Nef phosphorylation by PKC. Interacts with TP53; this interaction decreases the half-life of TP53, protecting the infected cell against p53-mediated apoptosis. Post-translationally, the virion-associated Nef proteins are cleaved by the viral protease to release the soluble C-terminal core protein. Nef is probably cleaved concomitantly with viral structural proteins on maturation of virus particles. In terms of processing, myristoylated. Phosphorylated on serine residues, probably by host PKCdelta and theta.

The protein localises to the host cell membrane. The protein resides in the virion. It localises to the secreted. It is found in the host Golgi apparatus membrane. In terms of biological role, factor of infectivity and pathogenicity, required for optimal virus replication. Alters numerous pathways of T-lymphocyte function and down-regulates immunity surface molecules in order to evade host defense and increase viral infectivity. Alters the functionality of other immunity cells, like dendritic cells, monocytes/macrophages and NK cells. Functionally, in infected CD4(+) T-lymphocytes, down-regulates the surface MHC-I, mature MHC-II, CD4, CD28, CCR5 and CXCR4 molecules. Mediates internalization and degradation of host CD4 through the interaction of with the cytoplasmic tail of CD4, the recruitment of AP-2 (clathrin adapter protein complex 2), internalization through clathrin coated pits, and subsequent transport to endosomes and lysosomes for degradation. Diverts host MHC-I molecules to the trans-Golgi network-associated endosomal compartments by an endocytic pathway to finally target them for degradation. MHC-I down-regulation may involve AP-1 (clathrin adapter protein complex 1) or possibly Src family kinase-ZAP70/Syk-PI3K cascade recruited by PACS2. In consequence infected cells are masked for immune recognition by cytotoxic T-lymphocytes. Decreasing the number of immune receptors also prevents reinfection by more HIV particles (superinfection). Down-regulates host SERINC3 and SERINC5 thereby excluding these proteins from the viral particles. Virion infectivity is drastically higher when SERINC3 or SERINC5 are excluded from the viral envelope, because these host antiviral proteins impair the membrane fusion event necessary for subsequent virion penetration. Bypasses host T-cell signaling by inducing a transcriptional program nearly identical to that of anti-CD3 cell activation. Interaction with TCR-zeta chain up-regulates the Fas ligand (FasL). Increasing surface FasL molecules and decreasing surface MHC-I molecules on infected CD4(+) cells send attacking cytotoxic CD8+ T-lymphocytes into apoptosis. Its function is as follows. Plays a role in optimizing the host cell environment for viral replication without causing cell death by apoptosis. Protects the infected cells from apoptosis in order to keep them alive until the next virus generation is ready to strike. Inhibits the Fas and TNFR-mediated death signals by blocking MAP3K5/ASK1. Decreases the half-life of TP53, protecting the infected cell against p53-mediated apoptosis. Inhibits the apoptotic signals regulated by the Bcl-2 family proteins through the formation of a Nef/PI3-kinase/PAK2 complex that leads to activation of PAK2 and induces phosphorylation of host BAD. In terms of biological role, extracellular Nef protein targets CD4(+) T-lymphocytes for apoptosis by interacting with CXCR4 surface receptors. This chain is Protein Nef, found in Homo sapiens (Human).